We begin with the raw amino-acid sequence, 446 residues long: MVEPGNLAGATGAEWIGRPPHEELQRKVRPLLPSDDPFYFPPAGYQHAVPGTVLRSRDVELAFMGLIPQPVTATQLLYRTTNMYGNPEATVTTVIVPAELAPGQTCPLLSYQCAIDAMSSRCFPSYALRRRAKALGSLTQMELLMISAALAEGWAVSVPDHEGPKGLWGSPYEPGYRVLDGIRAALNSERVGLSPATPIGLWGYSGGGLASAWAAEACGEYAPDLDIVGAVLGSPVGDLGHTFRRLNGTLLAGLPALVVAALQHSYPGLARVIKEHANDEGRQLLEQLTEMTTVDAVIRMAGRDMGDFLDEPLEDILSTPEVSHVFGDTKLGSAVPTPPVLIVQAVHDYLIDVSDIDALADSYTAGGANVTYHRDLFSEHVSLHPLSAPMTLRWLTDRFAGKPLTDHRVRTTWPTIFNPMTYAGMARLAVIAAKVITGRKLSRRPL.

Belongs to the AB hydrolase superfamily. Lipase family.

In Mycobacterium tuberculosis (strain CDC 1551 / Oshkosh), this protein is Probable inactive lipase MT1628.